A 290-amino-acid chain; its full sequence is Beta carbonic anhydrase 6, mitochondrial (290 aa).

Residues 1 to 20 (MAFTLGGRARRLVSATSVHQ) constitute a mitochondrion transit peptide. Phosphoserine is present on serine 122. Cysteine 226 bears the S-nitrosocysteine mark.

This sequence belongs to the beta-class carbonic anhydrase family. As to expression, strongly expressed in aerial tissues including leaves, stems, flowers and siliques, and, to a lower extent, in roots. Accumulates in guard cells.

It localises to the mitochondrion. It catalyses the reaction hydrogencarbonate + H(+) = CO2 + H2O. Reversible hydration of carbon dioxide. The sequence is that of Beta carbonic anhydrase 6, mitochondrial (BCA6) from Arabidopsis thaliana (Mouse-ear cress).